A 251-amino-acid chain; its full sequence is Cathelicidin-B1 (251 aa).

An N-terminal signal peptide occupies residues 1–20 (MGRMWASEVLLLLLLGSSRA). Residues 21 to 211 (VTPGLDVSTA…ELRCRPLRPQ (191 aa)) constitute a propeptide that is removed on maturation. The interval 29–109 (TAPGLDGSIP…TITPKQDGSI (81 aa)) is disordered. 2 cysteine pairs are disulfide-bonded: cysteine 172–cysteine 181 and cysteine 189–cysteine 205.

The protein belongs to the cathelicidin family. In terms of tissue distribution, detected in bursa of Fabricius, in filamentous structures surrounding the basal and lateral surfaces of bursal M cells (at protein level). Detected in bursa of Fabricius, in secretory enterocytes of the interfollicular bursal epithelium, but not in M cells.

It is found in the secreted. Has potent antimicrobial activity against Gram-positive and Gram-negative bacteria (in vitro). May play a role in the innate immune response. The sequence is that of Cathelicidin-B1 (CATHB1) from Gallus gallus (Chicken).